A 101-amino-acid chain; its full sequence is Feather keratin Cos1-1/Cos1-3/Cos2-1 (101 aa).

An N-acetylserine modification is found at serine 2.

The protein belongs to the avian keratin family. As to quaternary structure, the avian keratins (F-ker, S-ker, C-ker and B-ker) are a complex mixture of very similar polypeptides.

This Columba livia (Rock dove) protein is Feather keratin Cos1-1/Cos1-3/Cos2-1.